The chain runs to 101 residues: MGTRYLLVLLLVLLVLGFEVQGAHESQQDETTSSALLTQMQESLYSYWGTARSAAEDLYKKAYPTTMDEKIRDIYSKSTAAVSTYAGIFTDQLLSMLKGDS.

The signal sequence occupies residues 1 to 22 (MGTRYLLVLLLVLLVLGFEVQG). The tract at residues 66–74 (TMDEKIRDI) is lipid binding. Residues 78–101 (STAAVSTYAGIFTDQLLSMLKGDS) form a lipoprotein lipase cofactor region.

Belongs to the apolipoprotein C2 family. Proapolipoprotein C-II is synthesized as a sialic acid containing glycoprotein which is subsequently desialylated prior to its proteolytic processing. In terms of processing, proapolipoprotein C-II, the major form found in plasma undergoes proteolytic cleavage of its N-terminal hexapeptide to generate apolipoprotein C-II, which occurs as the minor form in plasma. As to expression, highly expressed in the liver. Moderately expressed in the ileum, jejunum and ovary.

It localises to the secreted. Its function is as follows. Component of chylomicrons, very low-density lipoproteins (VLDL), low-density lipoproteins (LDL), and high-density lipoproteins (HDL) in plasma. Plays an important role in lipoprotein metabolism as an activator of lipoprotein lipase. Both proapolipoprotein C-II and apolipoprotein C-II can activate lipoprotein lipase. This chain is Apolipoprotein C-II (APOC2), found in Canis lupus familiaris (Dog).